The following is a 1072-amino-acid chain: Carbamoyl phosphate synthase large chain (1072 aa).

The interval 1–401 (MPKRLDINTI…SLLKAVRSLE (401 aa)) is carboxyphosphate synthetic domain. Residues Arg-129, Arg-169, Gly-175, Gly-176, Lys-208, Ile-210, Glu-215, Gly-241, Val-242, His-243, Gln-284, and Glu-298 each coordinate ATP. The region spanning 133–327 (RTLMQDLNEP…IAKLAAKIAV (195 aa)) is the ATP-grasp 1 domain. Mg(2+) is bound by residues Gln-284, Glu-298, and Asn-300. Mn(2+)-binding residues include Gln-284, Glu-298, and Asn-300. Residues 402–546 (LGIYHLELDH…YSTYAEENES (145 aa)) form an oligomerization domain region. Residues 547–929 (IVTDRKSVVV…ALYKGLVASG (383 aa)) form a carbamoyl phosphate synthetic domain region. The region spanning 671 to 861 (EAALTKLGIP…MANVATKVIL (191 aa)) is the ATP-grasp 2 domain. Residues Arg-707, Arg-746, Glu-752, Gly-777, Val-778, His-779, Ser-780, Gln-820, and Glu-832 each coordinate ATP. Residues Gln-820, Glu-832, and Asn-834 each contribute to the Mg(2+) site. The Mn(2+) site is built by Gln-820, Glu-832, and Asn-834. In terms of domain architecture, MGS-like spans 930–1072 (INIPTHGSVI…QTKRHEVVHA (143 aa)). Residues 930-1072 (INIPTHGSVI…QTKRHEVVHA (143 aa)) form an allosteric domain region.

This sequence belongs to the CarB family. In terms of assembly, composed of two chains; the small (or glutamine) chain promotes the hydrolysis of glutamine to ammonia, which is used by the large (or ammonia) chain to synthesize carbamoyl phosphate. Tetramer of heterodimers (alpha,beta)4. The cofactor is Mg(2+). Requires Mn(2+) as cofactor.

It catalyses the reaction hydrogencarbonate + L-glutamine + 2 ATP + H2O = carbamoyl phosphate + L-glutamate + 2 ADP + phosphate + 2 H(+). The enzyme catalyses hydrogencarbonate + NH4(+) + 2 ATP = carbamoyl phosphate + 2 ADP + phosphate + 2 H(+). Its pathway is amino-acid biosynthesis; L-arginine biosynthesis; carbamoyl phosphate from bicarbonate: step 1/1. It participates in pyrimidine metabolism; UMP biosynthesis via de novo pathway; (S)-dihydroorotate from bicarbonate: step 1/3. Functionally, large subunit of the glutamine-dependent carbamoyl phosphate synthetase (CPSase). CPSase catalyzes the formation of carbamoyl phosphate from the ammonia moiety of glutamine, carbonate, and phosphate donated by ATP, constituting the first step of 2 biosynthetic pathways, one leading to arginine and/or urea and the other to pyrimidine nucleotides. The large subunit (synthetase) binds the substrates ammonia (free or transferred from glutamine from the small subunit), hydrogencarbonate and ATP and carries out an ATP-coupled ligase reaction, activating hydrogencarbonate by forming carboxy phosphate which reacts with ammonia to form carbamoyl phosphate. In Bacillus cereus (strain ATCC 10987 / NRS 248), this protein is Carbamoyl phosphate synthase large chain.